A 212-amino-acid polypeptide reads, in one-letter code: Thymidylate kinase (212 aa).

11 to 18 (GGEGVGKS) is a binding site for ATP.

It belongs to the thymidylate kinase family.

The catalysed reaction is dTMP + ATP = dTDP + ADP. Its function is as follows. Phosphorylation of dTMP to form dTDP in both de novo and salvage pathways of dTTP synthesis. In Chromohalobacter salexigens (strain ATCC BAA-138 / DSM 3043 / CIP 106854 / NCIMB 13768 / 1H11), this protein is Thymidylate kinase.